Reading from the N-terminus, the 610-residue chain is DNA mismatch repair protein MutL (610 aa).

Residues 351–406 (GQRPQAPWSAETSPSRPYQPAPAFSERPQASFDGLSTPTARAEPQFSPDPVSPGLA) form a disordered region.

It belongs to the DNA mismatch repair MutL/HexB family.

Functionally, this protein is involved in the repair of mismatches in DNA. It is required for dam-dependent methyl-directed DNA mismatch repair. May act as a 'molecular matchmaker', a protein that promotes the formation of a stable complex between two or more DNA-binding proteins in an ATP-dependent manner without itself being part of a final effector complex. In Rhizobium etli (strain ATCC 51251 / DSM 11541 / JCM 21823 / NBRC 15573 / CFN 42), this protein is DNA mismatch repair protein MutL.